Reading from the N-terminus, the 204-residue chain is Quinol oxidase subunit 3 (204 aa).

Helical transmembrane passes span 27–47 (FWIF…TFFV), 66–86 (LVMI…IAVH), 95–115 (GVVI…GCEI), 140–160 (LLGT…GILI), and 184–204 (FLDV…LGGL).

This sequence belongs to the cytochrome c oxidase subunit 3 family.

The protein localises to the cell membrane. The enzyme catalyses 2 a quinol + O2 = 2 a quinone + 2 H2O. Catalyzes quinol oxidation with the concomitant reduction of oxygen to water. Major component for energy conversion during vegetative growth. This is Quinol oxidase subunit 3 (qoxC) from Bacillus spizizenii (strain ATCC 23059 / NRRL B-14472 / W23) (Bacillus subtilis subsp. spizizenii).